We begin with the raw amino-acid sequence, 174 residues long: Urease accessory protein UreE (174 aa).

The tract at residues 146-174 (NGAYATGGHAHDHDGEPEHVHGPGCQHAH) is disordered. Residues 154 to 166 (HAHDHDGEPEHVH) show a composition bias toward basic and acidic residues.

It belongs to the UreE family.

It is found in the cytoplasm. Its function is as follows. Involved in urease metallocenter assembly. Binds nickel. Probably functions as a nickel donor during metallocenter assembly. The chain is Urease accessory protein UreE from Albidiferax ferrireducens (strain ATCC BAA-621 / DSM 15236 / T118) (Rhodoferax ferrireducens).